We begin with the raw amino-acid sequence, 133 residues long: Cytochrome c-554 (133 aa).

Glutamine 1 carries the pyrrolidone carboxylic acid modification. Heme c-binding residues include methionine 17, cysteine 122, cysteine 125, and histidine 126.

In terms of processing, binds 1 heme c group covalently per subunit.

The protein localises to the periplasm. In terms of biological role, monoheme c-type cytochrome, that is particularly expressed when cells generate energy via aerobic respiration. The polypeptide is Cytochrome c-554 (cycF) (Cereibacter sphaeroides (Rhodobacter sphaeroides)).